A 538-amino-acid polypeptide reads, in one-letter code: Fructooligosaccharide ABC transporter substrate-binding protein FusA (538 aa).

An N-terminal signal peptide occupies residues 1-22 (MKFKTFSKSAVLLTASLAVLAA). Cys-23 carries the N-palmitoyl cysteine lipid modification. A lipid anchor (S-diacylglycerol cysteine) is attached at Cys-23. Glu-167 contacts substrate. The Ca(2+) site is built by Asp-215, Asn-217, Asn-219, Glu-221, Asp-223, and Glu-224. Asn-235 lines the substrate pocket. Ca(2+) is bound by residues Asp-263, Phe-264, Asp-267, and Asn-268. Residues Trp-314, Asn-318, Lys-353, Trp-384, Arg-419, and Glu-423 each contribute to the substrate site.

It belongs to the bacterial solute-binding protein 1 family. The complex is composed of two ATP-binding proteins (MsmK), two transmembrane proteins (FusB and FusC) and a solute-binding protein (FusA).

Its subcellular location is the cell membrane. Part of the ABC transporter complex FusABC-MsmK involved in short- and long-chain fructooligosaccharide (FOS) import. Required for the utilization of long-chain FOSs. Binds kestose, nystose, fructofuranosyl-nystose and inulin, but not sucrose. Has a preference for long-chain FOSs (tetrasaccharides and larger). The sequence is that of Fructooligosaccharide ABC transporter substrate-binding protein FusA from Streptococcus pneumoniae serotype 4 (strain ATCC BAA-334 / TIGR4).